Consider the following 1207-residue polypeptide: DNA-directed RNA polymerase subunit beta' (1207 aa).

Zn(2+) is bound by residues C60, C62, C75, and C78. The Mg(2+) site is built by D450, D452, and D454. Zn(2+)-binding residues include C818, C892, C899, and C902.

Belongs to the RNA polymerase beta' chain family. In terms of assembly, the RNAP catalytic core consists of 2 alpha, 1 beta, 1 beta' and 1 omega subunit. When a sigma factor is associated with the core the holoenzyme is formed, which can initiate transcription. Mg(2+) serves as cofactor. Zn(2+) is required as a cofactor.

The catalysed reaction is RNA(n) + a ribonucleoside 5'-triphosphate = RNA(n+1) + diphosphate. Functionally, DNA-dependent RNA polymerase catalyzes the transcription of DNA into RNA using the four ribonucleoside triphosphates as substrates. In Lactococcus lactis subsp. cremoris (strain MG1363), this protein is DNA-directed RNA polymerase subunit beta'.